A 189-amino-acid polypeptide reads, in one-letter code: GMP synthase [glutamine-hydrolyzing] subunit A (189 aa).

The Glutamine amidotransferase type-1 domain occupies 1-189; the sequence is MIVILNNGGQ…CKKCGFEFEE (189 aa). The Nucleophile role is filled by cysteine 76. Catalysis depends on residues histidine 163 and glutamate 165.

Heterodimer composed of a glutamine amidotransferase subunit (A) and a GMP-binding subunit (B).

The enzyme catalyses XMP + L-glutamine + ATP + H2O = GMP + L-glutamate + AMP + diphosphate + 2 H(+). Its pathway is purine metabolism; GMP biosynthesis; GMP from XMP (L-Gln route): step 1/1. Functionally, catalyzes the synthesis of GMP from XMP. The chain is GMP synthase [glutamine-hydrolyzing] subunit A from Methanococcus maripaludis (strain C5 / ATCC BAA-1333).